Here is a 457-residue protein sequence, read N- to C-terminus: Siroheme synthase (457 aa).

The segment at 1–204 (MDHLPIFCQL…ADEKAVNATT (204 aa)) is precorrin-2 dehydrogenase /sirohydrochlorin ferrochelatase. Residues 22 to 23 (DV) and 43 to 44 (LN) each bind NAD(+). At Ser-128 the chain carries Phosphoserine. A uroporphyrinogen-III C-methyltransferase region spans residues 216 to 457 (GEVVLVGAGP…RDKLNWFSNH (242 aa)). Pro-225 contacts S-adenosyl-L-methionine. Residue Asp-248 is the Proton acceptor of the active site. Lys-270 acts as the Proton donor in catalysis. Residues 301-303 (GGD), Ile-306, 331-332 (TA), Met-382, and Gly-411 contribute to the S-adenosyl-L-methionine site.

In the N-terminal section; belongs to the precorrin-2 dehydrogenase / sirohydrochlorin ferrochelatase family. It in the C-terminal section; belongs to the precorrin methyltransferase family.

The enzyme catalyses uroporphyrinogen III + 2 S-adenosyl-L-methionine = precorrin-2 + 2 S-adenosyl-L-homocysteine + H(+). It catalyses the reaction precorrin-2 + NAD(+) = sirohydrochlorin + NADH + 2 H(+). The catalysed reaction is siroheme + 2 H(+) = sirohydrochlorin + Fe(2+). It participates in cofactor biosynthesis; adenosylcobalamin biosynthesis; precorrin-2 from uroporphyrinogen III: step 1/1. The protein operates within cofactor biosynthesis; adenosylcobalamin biosynthesis; sirohydrochlorin from precorrin-2: step 1/1. It functions in the pathway porphyrin-containing compound metabolism; siroheme biosynthesis; precorrin-2 from uroporphyrinogen III: step 1/1. Its pathway is porphyrin-containing compound metabolism; siroheme biosynthesis; siroheme from sirohydrochlorin: step 1/1. It participates in porphyrin-containing compound metabolism; siroheme biosynthesis; sirohydrochlorin from precorrin-2: step 1/1. Functionally, multifunctional enzyme that catalyzes the SAM-dependent methylations of uroporphyrinogen III at position C-2 and C-7 to form precorrin-2 via precorrin-1. Then it catalyzes the NAD-dependent ring dehydrogenation of precorrin-2 to yield sirohydrochlorin. Finally, it catalyzes the ferrochelation of sirohydrochlorin to yield siroheme. The chain is Siroheme synthase from Salmonella paratyphi A (strain ATCC 9150 / SARB42).